Here is a 101-residue protein sequence, read N- to C-terminus: Alkene monooxygenase system, effector subunit (101 aa).

This sequence belongs to the TmoD/XamoD family. Monomer. The alkene monooxygenase multicomponent enzyme system is composed of an electron transfer component and a monooxygenase component interacting with the effector protein XamoD. The electron transfer component is composed of a ferredoxin reductase (XamoF) and a ferredoxin (XamoC), and the monooxygenase component is formed by a heterohexamer (dimer of heterotrimers) of two alpha subunits (XamoA), two beta subunits (XamoE) and two gamma subunits (XamoB).

It is found in the cytoplasm. Functionally, effector component of the alkene monooxygenase multicomponent enzyme system which catalyzes the O2- and NADH-dependent epoxidation of short chain (C2 to C6) alkenes to their corresponding epoxides. One possible role of this small protein might be to facilitate electron transfer between the reductase and ferredoxin components. The protein is Alkene monooxygenase system, effector subunit of Xanthobacter autotrophicus (strain ATCC BAA-1158 / Py2).